Here is a 408-residue protein sequence, read N- to C-terminus: LL-diaminopimelate aminotransferase (408 aa).

Substrate is bound by residues Y15 and G42. Pyridoxal 5'-phosphate is bound by residues Y72, 108 to 109 (SK), Y132, N187, Y218, and 246 to 248 (SFS). Positions 109, 132, and 187 each coordinate substrate. K249 carries the N6-(pyridoxal phosphate)lysine modification. Residues R257 and N292 each contribute to the pyridoxal 5'-phosphate site. Substrate contacts are provided by N292 and R388.

It belongs to the class-I pyridoxal-phosphate-dependent aminotransferase family. LL-diaminopimelate aminotransferase subfamily. As to quaternary structure, homodimer. It depends on pyridoxal 5'-phosphate as a cofactor.

It catalyses the reaction (2S,6S)-2,6-diaminopimelate + 2-oxoglutarate = (S)-2,3,4,5-tetrahydrodipicolinate + L-glutamate + H2O + H(+). The protein operates within amino-acid biosynthesis; L-lysine biosynthesis via DAP pathway; LL-2,6-diaminopimelate from (S)-tetrahydrodipicolinate (aminotransferase route): step 1/1. Its function is as follows. Involved in the synthesis of meso-diaminopimelate (m-DAP or DL-DAP), required for both lysine and peptidoglycan biosynthesis. Catalyzes the direct conversion of tetrahydrodipicolinate to LL-diaminopimelate. In Prochlorococcus marinus (strain MIT 9312), this protein is LL-diaminopimelate aminotransferase.